The sequence spans 2841 residues: Neurofibromin (2841 aa).

Alanine 2 carries the N-acetylalanine modification. Phosphoserine occurs at positions 866 and 878. The Ras-GAP domain occupies histidine 1253–isoleucine 1484. The CRAL-TRIO domain maps to glutamate 1582–lysine 1740. Positions glutamate 1582 to aspartate 1839 are lipid binding. A phosphoserine mark is found at serine 2190 and serine 2469. Threonine 2516 carries the phosphothreonine modification. Phosphoserine is present on residues serine 2517, serine 2523, serine 2525, and serine 2545. A Bipartite nuclear localization signal motif is present at residues lysine 2557–arginine 2573. Phosphothreonine is present on threonine 2567. Phosphoserine occurs at positions 2599, 2804, and 2819. Residues serine 2786 to valine 2841 are disordered. Residues glycine 2818–alanine 2829 show a composition bias toward polar residues.

In terms of assembly, interacts with HTR6. Interacts with SPRED2. Ubiquitinated by RNF7/RBX2, leading to its degradation. In terms of tissue distribution, expressed predominantly in brain, spinal cord and testis. As to expression, expressed predominantly in adrenal gland, kidney, ovary and lung. Widely and more weakly expressed. Predominantly expressed in adrenal gland. In terms of tissue distribution, widely and more weakly expressed. Expressed mainly in testis.

The protein resides in the nucleus. It localises to the nucleolus. It is found in the cell membrane. Stimulates the GTPase activity of Ras. NF1 shows greater affinity for Ras GAP, but lower specific activity. May be a regulator of Ras activity. The chain is Neurofibromin (Nf1) from Mus musculus (Mouse).